Consider the following 160-residue polypeptide: Endoribonuclease YbeY (160 aa).

Zn(2+) contacts are provided by histidine 112, histidine 116, and histidine 122. Residues 141-160 (ELGHPDPYACDDEEPPSKEK) form a disordered region.

Belongs to the endoribonuclease YbeY family. Zn(2+) serves as cofactor.

The protein localises to the cytoplasm. In terms of biological role, single strand-specific metallo-endoribonuclease involved in late-stage 70S ribosome quality control and in maturation of the 3' terminus of the 16S rRNA. This chain is Endoribonuclease YbeY, found in Pseudomonas aeruginosa (strain UCBPP-PA14).